The chain runs to 144 residues: MLISKRRLIHAISYEGILLVIIAIALSFIFNMPMEVTGTLGVFMAVVSVFWNMIFNHYFEKVEHKYNWERTIPVRILHAIGFEGGLLIATVPMIAYMMQMTVIDAFILDIGLTLCILVYTFIFQWCYDHIEDKFFPNAKAASLH.

4 helical membrane passes run 9–29 (IHAI…LSFI), 35–55 (EVTG…NMIF), 76–96 (ILHA…MIAY), and 103–123 (IDAF…TFIF).

It belongs to the proteobacterial antimicrobial compound efflux (PACE) (TC 2.A.117) family. As to quaternary structure, exists in a monomer-homodimer equilibrium. The dimer is probably the functional form of the protein, and the assembly of the dimer is mediated by binding of chlorhexidine and promoted by high pH conditions.

The protein localises to the cell inner membrane. Protonation/deprotonation of Glu-15 may play an important role in transporter function. Cadaverin transport is inhibited in the presence of CCCP. In terms of biological role, mediates the efflux of short-chain diamines when energized by an electrochemical gradient. Recognizes specifically the short-chain diamines cadaverine and putrescine as substrates, and promotes the active transport of these substrates in exchange for a cation. Protons are probably the primary source of energy for transport, however it was not possible to conclude with complete certainty that protons, rather than alternative cations such as Na(+) ions, are exchanged for substrates by AceI. In addition, is involved in resistance to the synthetic biocide chlorhexidine, a widely used antiseptic and disinfectant in both hospital and community settings. Interacts directly with chlorhexidine and mediates its efflux via an energy-dependent mechanism. This Acinetobacter baumannii (strain ATCC 17978 / DSM 105126 / CIP 53.77 / LMG 1025 / NCDC KC755 / 5377) protein is Short-chain diamines transporter.